The primary structure comprises 577 residues: Arginine--tRNA ligase (577 aa).

A 'HIGH' region motif is present at residues 122 to 132 (PNVAKEMHVGH).

The protein belongs to the class-I aminoacyl-tRNA synthetase family. In terms of assembly, monomer.

Its subcellular location is the cytoplasm. The enzyme catalyses tRNA(Arg) + L-arginine + ATP = L-arginyl-tRNA(Arg) + AMP + diphosphate. The polypeptide is Arginine--tRNA ligase (Escherichia coli O81 (strain ED1a)).